Reading from the N-terminus, the 485-residue chain is NADH-quinone oxidoreductase subunit N (485 aa).

14 helical membrane-spanning segments follow: residues 8–28 (LIAL…MLSI), 35–55 (FLNA…LWFV), 71–91 (GFAM…CTFA), 105–125 (FYLL…ANHL), 127–147 (SLFL…GYAF), 159–179 (YTIL…LVYA), 203–223 (LLAG…LVPF), 235–255 (PAPV…GVVM), 271–291 (VVLA…ALSQ), 297–317 (LLGY…IALQ), 326–346 (VGVY…VVSL), 373–393 (AAVM…LGFI), 408–430 (WWLV…RVAV), and 455–475 (IVVL…QPLI).

Belongs to the complex I subunit 2 family. NDH-1 is composed of 13 different subunits. Subunits NuoA, H, J, K, L, M, N constitute the membrane sector of the complex.

The protein localises to the cell inner membrane. It carries out the reaction a quinone + NADH + 5 H(+)(in) = a quinol + NAD(+) + 4 H(+)(out). Its function is as follows. NDH-1 shuttles electrons from NADH, via FMN and iron-sulfur (Fe-S) centers, to quinones in the respiratory chain. The immediate electron acceptor for the enzyme in this species is believed to be ubiquinone. Couples the redox reaction to proton translocation (for every two electrons transferred, four hydrogen ions are translocated across the cytoplasmic membrane), and thus conserves the redox energy in a proton gradient. The chain is NADH-quinone oxidoreductase subunit N from Escherichia coli O6:K15:H31 (strain 536 / UPEC).